Here is a 57-residue protein sequence, read N- to C-terminus: Large ribosomal subunit protein bL32 (57 aa).

Residues 1–20 (MAVPKKKTSKAKRDQRRATW) are compositionally biased toward basic residues. Positions 1 to 24 (MAVPKKKTSKAKRDQRRATWRRQA) are disordered.

This sequence belongs to the bacterial ribosomal protein bL32 family.

The chain is Large ribosomal subunit protein bL32 from Gloeothece citriformis (strain PCC 7424) (Cyanothece sp. (strain PCC 7424)).